A 502-amino-acid chain; its full sequence is Type-2 serine--tRNA ligase (502 aa).

Alanine 304 lines the L-serine pocket. Cysteine 306 is a Zn(2+) binding site. An L-serine-binding site is contributed by arginine 336. Residues 336 to 338 and 347 to 348 each bind ATP; these read RYE and RV. L-serine-binding positions include 353 to 355 and glutamine 400; that span reads RVE. Position 355 (glutamate 355) interacts with Zn(2+). Glutamate 432 contacts ATP. L-serine is bound at residue asparagine 435. Zn(2+) is bound at residue cysteine 461. Arginine 468 contributes to the ATP binding site.

It belongs to the class-II aminoacyl-tRNA synthetase family. Type-2 seryl-tRNA synthetase subfamily. Homodimer. It depends on Zn(2+) as a cofactor.

Its subcellular location is the cytoplasm. The catalysed reaction is tRNA(Ser) + L-serine + ATP = L-seryl-tRNA(Ser) + AMP + diphosphate + H(+). The enzyme catalyses tRNA(Sec) + L-serine + ATP = L-seryl-tRNA(Sec) + AMP + diphosphate + H(+). It participates in aminoacyl-tRNA biosynthesis; selenocysteinyl-tRNA(Sec) biosynthesis; L-seryl-tRNA(Sec) from L-serine and tRNA(Sec): step 1/1. Catalyzes the attachment of serine to tRNA(Ser). Is also able to aminoacylate tRNA(Sec) with serine, to form the misacylated tRNA L-seryl-tRNA(Sec), which will be further converted into selenocysteinyl-tRNA(Sec). In Methanococcoides burtonii (strain DSM 6242 / NBRC 107633 / OCM 468 / ACE-M), this protein is Type-2 serine--tRNA ligase.